Consider the following 219-residue polypeptide: Leucyl/phenylalanyl-tRNA--protein transferase (219 aa).

It belongs to the L/F-transferase family.

The protein localises to the cytoplasm. The catalysed reaction is N-terminal L-lysyl-[protein] + L-leucyl-tRNA(Leu) = N-terminal L-leucyl-L-lysyl-[protein] + tRNA(Leu) + H(+). It carries out the reaction N-terminal L-arginyl-[protein] + L-leucyl-tRNA(Leu) = N-terminal L-leucyl-L-arginyl-[protein] + tRNA(Leu) + H(+). The enzyme catalyses L-phenylalanyl-tRNA(Phe) + an N-terminal L-alpha-aminoacyl-[protein] = an N-terminal L-phenylalanyl-L-alpha-aminoacyl-[protein] + tRNA(Phe). Its function is as follows. Functions in the N-end rule pathway of protein degradation where it conjugates Leu, Phe and, less efficiently, Met from aminoacyl-tRNAs to the N-termini of proteins containing an N-terminal arginine or lysine. This is Leucyl/phenylalanyl-tRNA--protein transferase from Leptospira borgpetersenii serovar Hardjo-bovis (strain JB197).